The chain runs to 560 residues: Probable sulfate transporter Rv1739c (560 aa).

The required for sulfate transport in E.coli stretch occupies residues 1–436 (MIPTMTSAGW…VLGFVPGIAG (436 aa)). 11 helical membrane passes run 29-49 (VLAG…YATV), 51-71 (GLPP…YALL), 79-99 (IGPE…MAAG), 105-125 (AVLA…AGTA), 138-158 (VLVG…LGTI), 184-204 (WPTF…TRWA), 207-227 (APGP…MSLD), 256-276 (ALII…VLTA), 333-353 (LIAL…LAMF), 355-375 (IAAL…LSEF), and 394-414 (AAVL…LSIL). In terms of domain architecture, STAS spans 442-557 (DYPQAKRVPG…MTLPTAVQAF (116 aa)).

The protein belongs to the SLC26A/SulP transporter (TC 2.A.53) family.

The protein localises to the cell membrane. Expression in E.coli induces sulfate uptake during early- to mid-log phase growth. Uptake is maximal at pH 6.0, is sulfate-specific, requires E.coli CysA and the transmembrane segment but not the STAS domain of the protein. This Mycobacterium tuberculosis (strain ATCC 25618 / H37Rv) protein is Probable sulfate transporter Rv1739c.